Reading from the N-terminus, the 131-residue chain is Prefoldin subunit beta (131 aa).

Disordered stretches follow at residues 19 to 41 (LQET…RESE) and 112 to 131 (LQGG…AGGA). Low complexity predominate over residues 20 to 35 (QETAQQVAQQKQQAET). Over residues 114–131 (GGAGGGPMGPGGPGAGGA) the composition is skewed to gly residues.

The protein belongs to the prefoldin subunit beta family. As to quaternary structure, heterohexamer of two alpha and four beta subunits.

Its subcellular location is the cytoplasm. Molecular chaperone capable of stabilizing a range of proteins. Seems to fulfill an ATP-independent, HSP70-like function in archaeal de novo protein folding. The chain is Prefoldin subunit beta from Natronomonas pharaonis (strain ATCC 35678 / DSM 2160 / CIP 103997 / JCM 8858 / NBRC 14720 / NCIMB 2260 / Gabara) (Halobacterium pharaonis).